The chain runs to 620 residues: Chaperone protein HscA homolog (620 aa).

This sequence belongs to the heat shock protein 70 family.

Chaperone involved in the maturation of iron-sulfur cluster-containing proteins. Has a low intrinsic ATPase activity which is markedly stimulated by HscB. This Acinetobacter baylyi (strain ATCC 33305 / BD413 / ADP1) protein is Chaperone protein HscA homolog.